A 692-amino-acid chain; its full sequence is ABC1 family protein C21C3.03, mitochondrial (692 aa).

The N-terminal 91 residues, 1–91 (MISFSHWNSH…RKFTTRQKSE (91 aa)), are a transit peptide targeting the mitochondrion. The next 2 membrane-spanning stretches (helical) occupy residues 96–116 (WRILRITFLVLPFTVGGLWIL) and 161–181 (LFIIFSPIIITLPFIALISFL).

It belongs to the protein kinase superfamily. ADCK protein kinase family.

The protein resides in the mitochondrion membrane. The protein is ABC1 family protein C21C3.03, mitochondrial of Schizosaccharomyces pombe (strain 972 / ATCC 24843) (Fission yeast).